The primary structure comprises 325 residues: Holliday junction branch migration complex subunit RuvB (325 aa).

Positions 1-172 (MENNELLDIT…FGVVFRLEFY (172 aa)) are large ATPase domain (RuvB-L). ATP is bound by residues leucine 11, arginine 12, glycine 53, lysine 56, threonine 57, threonine 58, 119–121 (EDF), arginine 162, tyrosine 172, and arginine 209. Mg(2+) is bound at residue threonine 57. Residues 173–243 (NSEELKEIVK…IAQEALIAMD (71 aa)) form a small ATPAse domain (RuvB-S) region. Residues 246 to 325 (DYGLDDMDRK…LKRKIPERLF (80 aa)) form a head domain (RuvB-H) region. Residues arginine 301 and arginine 306 each coordinate DNA.

It belongs to the RuvB family. Homohexamer. Forms an RuvA(8)-RuvB(12)-Holliday junction (HJ) complex. HJ DNA is sandwiched between 2 RuvA tetramers; dsDNA enters through RuvA and exits via RuvB. An RuvB hexamer assembles on each DNA strand where it exits the tetramer. Each RuvB hexamer is contacted by two RuvA subunits (via domain III) on 2 adjacent RuvB subunits; this complex drives branch migration. In the full resolvosome a probable DNA-RuvA(4)-RuvB(12)-RuvC(2) complex forms which resolves the HJ.

It localises to the cytoplasm. The enzyme catalyses ATP + H2O = ADP + phosphate + H(+). Functionally, the RuvA-RuvB-RuvC complex processes Holliday junction (HJ) DNA during genetic recombination and DNA repair, while the RuvA-RuvB complex plays an important role in the rescue of blocked DNA replication forks via replication fork reversal (RFR). RuvA specifically binds to HJ cruciform DNA, conferring on it an open structure. The RuvB hexamer acts as an ATP-dependent pump, pulling dsDNA into and through the RuvAB complex. RuvB forms 2 homohexamers on either side of HJ DNA bound by 1 or 2 RuvA tetramers; 4 subunits per hexamer contact DNA at a time. Coordinated motions by a converter formed by DNA-disengaged RuvB subunits stimulates ATP hydrolysis and nucleotide exchange. Immobilization of the converter enables RuvB to convert the ATP-contained energy into a lever motion, pulling 2 nucleotides of DNA out of the RuvA tetramer per ATP hydrolyzed, thus driving DNA branch migration. The RuvB motors rotate together with the DNA substrate, which together with the progressing nucleotide cycle form the mechanistic basis for DNA recombination by continuous HJ branch migration. Branch migration allows RuvC to scan DNA until it finds its consensus sequence, where it cleaves and resolves cruciform DNA. In Thermodesulfovibrio yellowstonii (strain ATCC 51303 / DSM 11347 / YP87), this protein is Holliday junction branch migration complex subunit RuvB.